Here is a 442-residue protein sequence, read N- to C-terminus: Exodeoxyribonuclease 7 large subunit (442 aa).

It belongs to the XseA family. Heterooligomer composed of large and small subunits.

Its subcellular location is the cytoplasm. The catalysed reaction is Exonucleolytic cleavage in either 5'- to 3'- or 3'- to 5'-direction to yield nucleoside 5'-phosphates.. Bidirectionally degrades single-stranded DNA into large acid-insoluble oligonucleotides, which are then degraded further into small acid-soluble oligonucleotides. This chain is Exodeoxyribonuclease 7 large subunit, found in Shewanella woodyi (strain ATCC 51908 / MS32).